The sequence spans 334 residues: Phosphoribosylformylglycinamidine cyclo-ligase (334 aa).

The protein belongs to the AIR synthase family.

Its subcellular location is the cytoplasm. The catalysed reaction is 2-formamido-N(1)-(5-O-phospho-beta-D-ribosyl)acetamidine + ATP = 5-amino-1-(5-phospho-beta-D-ribosyl)imidazole + ADP + phosphate + H(+). It functions in the pathway purine metabolism; IMP biosynthesis via de novo pathway; 5-amino-1-(5-phospho-D-ribosyl)imidazole from N(2)-formyl-N(1)-(5-phospho-D-ribosyl)glycinamide: step 2/2. This chain is Phosphoribosylformylglycinamidine cyclo-ligase, found in Thermococcus gammatolerans (strain DSM 15229 / JCM 11827 / EJ3).